A 232-amino-acid chain; its full sequence is Small ribosomal subunit protein uS3 (232 aa).

The region spanning 39–107 (IRAFLKKKLY…EVNVNIKEER (69 aa)) is the KH type-2 domain. The segment at 212–232 (VQPEKTEDDAPKKTRRPRRGK) is disordered. A compositionally biased stretch (basic and acidic residues) spans 213 to 223 (QPEKTEDDAPK).

The protein belongs to the universal ribosomal protein uS3 family. Part of the 30S ribosomal subunit. Forms a tight complex with proteins S10 and S14.

Functionally, binds the lower part of the 30S subunit head. Binds mRNA in the 70S ribosome, positioning it for translation. This is Small ribosomal subunit protein uS3 from Campylobacter curvus (strain 525.92).